The chain runs to 255 residues: Ribosomal RNA small subunit methyltransferase G (255 aa).

A disordered region spans residues 1–44 (MSSPGRPKGEYRSAQHAGAVAGPPGRPDGEHRGSSGADPNGRLR). Residues G118, L123, 169–170 (VE), and R183 each bind S-adenosyl-L-methionine.

It belongs to the methyltransferase superfamily. RNA methyltransferase RsmG family.

The protein localises to the cytoplasm. The enzyme catalyses guanosine(527) in 16S rRNA + S-adenosyl-L-methionine = N(7)-methylguanosine(527) in 16S rRNA + S-adenosyl-L-homocysteine. Specifically methylates the N7 position of guanine in position 527 of 16S rRNA. The polypeptide is Ribosomal RNA small subunit methyltransferase G (Bordetella petrii (strain ATCC BAA-461 / DSM 12804 / CCUG 43448)).